The sequence spans 485 residues: Tektin-5 (485 aa).

Coiled coils occupy residues 113–185, 225–251, 342–385, and 423–443; these read SRLT…EVNC, QQQM…ALER, FNAR…MAKE, and DDTL…LQLL.

Belongs to the tektin family. In terms of assembly, microtubule inner protein component of sperm flagellar doublet microtubules. Interacts with TEKT3. Ubiquitinated, leading to its degradation. Deubiquitinated by USP16, promoting its stability.

It localises to the cytoplasm. The protein resides in the cytoskeleton. It is found in the flagellum axoneme. In terms of biological role, sperm-specific microtubule inner protein (MIP) part of the dynein-decorated doublet microtubules (DMTs) in flagellar axoneme. Forms an extensive interaction network in different conformations that reinforces the helix bundle composed by other tektin proteins (TEKT1 to TEKT4) and MIPs to anchor the tektin bundle onto the tubulin wall of A-tubule of the sperm flagellum. The chain is Tektin-5 (TEKT5) from Macaca fascicularis (Crab-eating macaque).